The following is a 692-amino-acid chain: Centrosomal protein of 83 kDa (692 aa).

Coiled-coil stretches lie at residues 32 to 625 (RCEH…SLIL) and 656 to 689 (HLQE…ELGS). Residue Ser689 is modified to Phosphoserine.

This sequence belongs to the CEP83 family. As to quaternary structure, interacts with CEP164 and IFT20.

Its subcellular location is the cytoplasm. It is found in the cytoskeleton. The protein resides in the microtubule organizing center. It localises to the centrosome. The protein localises to the centriole. In terms of biological role, component of the distal appendage region of the centriole involved in the initiation of primary cilium assembly. May collaborate with IFT20 in the trafficking of ciliary membrane proteins from the Golgi complex to the cilium during the initiation of primary cilium assembly. This is Centrosomal protein of 83 kDa (Cep83) from Mus musculus (Mouse).